Reading from the N-terminus, the 403-residue chain is GDSL esterase/lipase At1g28590 (403 aa).

Residues 1 to 27 form the signal peptide; that stretch reads MASLDSLPAMKLVRFILSTLLVTSVNS. The Nucleophile role is filled by Ser43. Residues Asn139 and Asn323 are each glycosylated (N-linked (GlcNAc...) asparagine). Active-site residues include Asp346 and His349.

The protein belongs to the 'GDSL' lipolytic enzyme family.

Its subcellular location is the secreted. The protein is GDSL esterase/lipase At1g28590 of Arabidopsis thaliana (Mouse-ear cress).